The sequence spans 562 residues: Serine/threonine-protein kinase dst3 (562 aa).

Positions 23–285 constitute a Protein kinase domain; the sequence is FQIVEVVGSG…AQQLLSHPFI (263 aa). Residues 29-37 and K59 each bind ATP; that span reads VGSGSFGTV. D154 serves as the catalytic Proton acceptor. Disordered stretches follow at residues 316-339 and 366-562; these read LEEQEQQRNSSGSKMVSSVPTRAS and SIMR…NVNI. Over residues 322-339 the composition is skewed to polar residues; sequence QRNSSGSKMVSSVPTRAS. 3 stretches are compositionally biased toward low complexity: residues 421–431, 442–454, and 476–494; these read NNNNNNNNTTT, QQQQQQQQQNNNK, and TTPTTPTTTQPNTSTTTKT. A compositionally biased stretch (polar residues) spans 495 to 522; it reads GSSLNIKPTNNVNRSTISIGQQKSPLQS. Acidic residues predominate over residues 542–562; that stretch reads EDEEDEEEFNHEDYEEINVNI.

The protein belongs to the protein kinase superfamily. STE Ser/Thr protein kinase family. STE20 subfamily. Requires Mg(2+) as cofactor.

The enzyme catalyses L-seryl-[protein] + ATP = O-phospho-L-seryl-[protein] + ADP + H(+). It catalyses the reaction L-threonyl-[protein] + ATP = O-phospho-L-threonyl-[protein] + ADP + H(+). The chain is Serine/threonine-protein kinase dst3 from Dictyostelium discoideum (Social amoeba).